The following is a 232-amino-acid chain: Sec-independent protein translocase protein TatB (232 aa).

The chain crosses the membrane as a helical span at residues 1-21 (MFDIGFGELMLLFVIGLVVLG). Disordered regions lie at residues 108–129 (EPHTIHNPLVTDPEALHDGVTP) and 176–232 (AAST…NNDR). 2 stretches are compositionally biased toward low complexity: residues 189-203 (ADSAANLATQAATPA) and 214-232 (RAATATGPASSTSPLNNDR).

This sequence belongs to the TatB family. In terms of assembly, the Tat system comprises two distinct complexes: a TatABC complex, containing multiple copies of TatA, TatB and TatC subunits, and a separate TatA complex, containing only TatA subunits. Substrates initially bind to the TatABC complex, which probably triggers association of the separate TatA complex to form the active translocon.

The protein localises to the cell inner membrane. Functionally, part of the twin-arginine translocation (Tat) system that transports large folded proteins containing a characteristic twin-arginine motif in their signal peptide across membranes. Together with TatC, TatB is part of a receptor directly interacting with Tat signal peptides. TatB may form an oligomeric binding site that transiently accommodates folded Tat precursor proteins before their translocation. This Sodalis glossinidius (strain morsitans) protein is Sec-independent protein translocase protein TatB.